A 352-amino-acid chain; its full sequence is Mannonate dehydratase (352 aa).

The protein belongs to the mannonate dehydratase family. Fe(2+) serves as cofactor. It depends on Mn(2+) as a cofactor.

The enzyme catalyses D-mannonate = 2-dehydro-3-deoxy-D-gluconate + H2O. It functions in the pathway carbohydrate metabolism; pentose and glucuronate interconversion. In terms of biological role, catalyzes the dehydration of D-mannonate. This is Mannonate dehydratase from Paraburkholderia phytofirmans (strain DSM 17436 / LMG 22146 / PsJN) (Burkholderia phytofirmans).